Consider the following 170-residue polypeptide: Microfibrillar-associated protein 5 (170 aa).

A signal peptide spans 1 to 20 (MTFFGPKVLLLLTALIMSSG). Positions 30–32 (RGD) match the Cell attachment site motif. Residue Asn-76 is glycosylated (N-linked (GlcNAc...) asparagine).

This sequence belongs to the MFAP family. Interacts with TGFB2. Interacts with BMP2. Interacts with FBN1 (via N-terminal domain) and FBN2. Forms intermolecular disulfide bonds either with other MAGP-2 molecules or with other components of the microfibrils. Associated with fibrillin-containing microfibrils of the developing nuchal ligament.

Its subcellular location is the secreted. The protein resides in the extracellular space. The protein localises to the extracellular matrix. May play a role in hematopoiesis. In the cardiovascular system, could regulate growth factors or participate in cell signaling in maintaining large vessel integrity. Component of the elastin-associated microfibrils. The sequence is that of Microfibrillar-associated protein 5 (MFAP5) from Bos taurus (Bovine).